Here is an 84-residue protein sequence, read N- to C-terminus: Small ribosomal subunit protein bS18B (84 aa).

The segment covering 1-10 (MAVKRAPSKK) has biased composition (basic residues). Residues 1 to 20 (MAVKRAPSKKVRAEQARRPK) form a disordered region.

Belongs to the bacterial ribosomal protein bS18 family. Part of the 30S ribosomal subunit. Forms a tight heterodimer with protein bS6.

Its function is as follows. Binds as a heterodimer with protein bS6 to the central domain of the 16S rRNA, where it helps stabilize the platform of the 30S subunit. This Nocardia farcinica (strain IFM 10152) protein is Small ribosomal subunit protein bS18B.